The primary structure comprises 265 residues: ATP synthase subunit a (265 aa).

A run of 6 helical transmembrane segments spans residues 26–46 (VHLDTLFFSLVSGVLFLFFFY), 88–108 (IGSLALTIFCWVFIMNAIDLI), 132–152 (DISATLGMSVCVFALIIFYTI), 168–188 (PFNHWAFIPVNFLLEAVTLLA), 195–217 (FRLFGNMYAGELIFVLIAVMYMA), and 231–251 (LIWAIFHILVITLQAFIFMML).

This sequence belongs to the ATPase A chain family. As to quaternary structure, F-type ATPases have 2 components, CF(1) - the catalytic core - and CF(0) - the membrane proton channel. CF(1) has five subunits: alpha(3), beta(3), gamma(1), delta(1), epsilon(1). CF(0) has three main subunits: a(1), b(2) and c(9-12). The alpha and beta chains form an alternating ring which encloses part of the gamma chain. CF(1) is attached to CF(0) by a central stalk formed by the gamma and epsilon chains, while a peripheral stalk is formed by the delta and b chains.

The protein resides in the cell inner membrane. Its function is as follows. Key component of the proton channel; it plays a direct role in the translocation of protons across the membrane. This chain is ATP synthase subunit a, found in Histophilus somni (strain 2336) (Haemophilus somnus).